The following is a 59-amino-acid chain: Large ribosomal subunit protein bL32 (59 aa).

Residues 1-59 (MAVQQNRKTPSKRGMRRSHDSLSKPTLSTEQNTGETHRRHHISADGYYRGRKVTRGQDD) are disordered. Residues 23 to 34 (SKPTLSTEQNTG) are compositionally biased toward polar residues. The segment covering 49–59 (RGRKVTRGQDD) has biased composition (basic residues).

The protein belongs to the bacterial ribosomal protein bL32 family.

The polypeptide is Large ribosomal subunit protein bL32 (Halorhodospira halophila (strain DSM 244 / SL1) (Ectothiorhodospira halophila (strain DSM 244 / SL1))).